The primary structure comprises 185 residues: Elongation factor P (185 aa).

This sequence belongs to the elongation factor P family.

The protein localises to the cytoplasm. The protein operates within protein biosynthesis; polypeptide chain elongation. Involved in peptide bond synthesis. Stimulates efficient translation and peptide-bond synthesis on native or reconstituted 70S ribosomes in vitro. Probably functions indirectly by altering the affinity of the ribosome for aminoacyl-tRNA, thus increasing their reactivity as acceptors for peptidyl transferase. The protein is Elongation factor P of Metamycoplasma arthritidis (strain 158L3-1) (Mycoplasma arthritidis).